The primary structure comprises 289 residues: RING-H2 finger protein ATL30 (289 aa).

The chain crosses the membrane as a helical span at residues 26-46 (VIILTVILLVVFFIGFFAIYF). An RING-type; atypical zinc finger spans residues 114–157 (CAICLLEFEEEHILLRLLTTCYHVFHQECIDQWLESNKTCPVCR). The disordered stretch occupies residues 181-206 (HENRDQEQTSTSNEVMLSRQSSGNNE). The segment covering 188–204 (QTSTSNEVMLSRQSSGN) has biased composition (polar residues).

It belongs to the RING-type zinc finger family. ATL subfamily.

It localises to the membrane. It catalyses the reaction S-ubiquitinyl-[E2 ubiquitin-conjugating enzyme]-L-cysteine + [acceptor protein]-L-lysine = [E2 ubiquitin-conjugating enzyme]-L-cysteine + N(6)-ubiquitinyl-[acceptor protein]-L-lysine.. It functions in the pathway protein modification; protein ubiquitination. The polypeptide is RING-H2 finger protein ATL30 (ATL30) (Arabidopsis thaliana (Mouse-ear cress)).